The following is a 126-amino-acid chain: Spermidine export protein MdtJ (126 aa).

A run of 4 helical transmembrane segments spans residues 1–21, 32–52, 55–75, and 82–102; these read MMIYWIFLGLAIVAEIIGTLS, TGHIVMYFMITGSYIMLALAV, VALGVAYALWEGIGILIITVF, and ESLSPLKIAGLVTLVGGIMLV. Residues 104–126 form a disordered region; sequence SGTRKPKKPNSPNRNSGEHHATA.

Belongs to the drug/metabolite transporter (DMT) superfamily. Small multidrug resistance (SMR) (TC 2.A.7.1) family. MdtJ subfamily. Forms a complex with MdtI.

Its subcellular location is the cell inner membrane. Functionally, catalyzes the excretion of spermidine. In Yersinia enterocolitica serotype O:8 / biotype 1B (strain NCTC 13174 / 8081), this protein is Spermidine export protein MdtJ.